Reading from the N-terminus, the 364-residue chain is tRNA 2-selenouridine synthase (364 aa).

The Rhodanese domain maps to 14 to 137 (LIADTPIIDV…LRQTAIQATI (124 aa)). Cys-97 functions as the S-selanylcysteine intermediate in the catalytic mechanism.

Belongs to the SelU family. In terms of assembly, monomer.

It carries out the reaction 5-methylaminomethyl-2-thiouridine(34) in tRNA + selenophosphate + (2E)-geranyl diphosphate + H2O + H(+) = 5-methylaminomethyl-2-selenouridine(34) in tRNA + (2E)-thiogeraniol + phosphate + diphosphate. The enzyme catalyses 5-methylaminomethyl-2-thiouridine(34) in tRNA + (2E)-geranyl diphosphate = 5-methylaminomethyl-S-(2E)-geranyl-thiouridine(34) in tRNA + diphosphate. The catalysed reaction is 5-methylaminomethyl-S-(2E)-geranyl-thiouridine(34) in tRNA + selenophosphate + H(+) = 5-methylaminomethyl-2-(Se-phospho)selenouridine(34) in tRNA + (2E)-thiogeraniol. It catalyses the reaction 5-methylaminomethyl-2-(Se-phospho)selenouridine(34) in tRNA + H2O = 5-methylaminomethyl-2-selenouridine(34) in tRNA + phosphate. Functionally, involved in the post-transcriptional modification of the uridine at the wobble position (U34) of tRNA(Lys), tRNA(Glu) and tRNA(Gln). Catalyzes the conversion of 2-thiouridine (S2U-RNA) to 2-selenouridine (Se2U-RNA). Acts in a two-step process involving geranylation of 2-thiouridine (S2U) to S-geranyl-2-thiouridine (geS2U) and subsequent selenation of the latter derivative to 2-selenouridine (Se2U) in the tRNA chain. In Escherichia coli O17:K52:H18 (strain UMN026 / ExPEC), this protein is tRNA 2-selenouridine synthase.